The sequence spans 55 residues: Large ribosomal subunit protein bL33 (55 aa).

This sequence belongs to the bacterial ribosomal protein bL33 family.

The polypeptide is Large ribosomal subunit protein bL33 (Bradyrhizobium diazoefficiens (strain JCM 10833 / BCRC 13528 / IAM 13628 / NBRC 14792 / USDA 110)).